The sequence spans 171 residues: 3-hydroxydecanoyl-[acyl-carrier-protein] dehydratase (171 aa).

Residue His70 is part of the active site.

This sequence belongs to the thioester dehydratase family. FabA subfamily. In terms of assembly, homodimer.

The protein localises to the cytoplasm. The enzyme catalyses a (3R)-hydroxyacyl-[ACP] = a (2E)-enoyl-[ACP] + H2O. The catalysed reaction is (3R)-hydroxydecanoyl-[ACP] = (2E)-decenoyl-[ACP] + H2O. It carries out the reaction (2E)-decenoyl-[ACP] = (3Z)-decenoyl-[ACP]. Its pathway is lipid metabolism; fatty acid biosynthesis. In terms of biological role, necessary for the introduction of cis unsaturation into fatty acids. Catalyzes the dehydration of (3R)-3-hydroxydecanoyl-ACP to E-(2)-decenoyl-ACP and then its isomerization to Z-(3)-decenoyl-ACP. Can catalyze the dehydratase reaction for beta-hydroxyacyl-ACPs with saturated chain lengths up to 16:0, being most active on intermediate chain length. In Pseudomonas putida (strain W619), this protein is 3-hydroxydecanoyl-[acyl-carrier-protein] dehydratase.